Reading from the N-terminus, the 620-residue chain is Chaperone protein HscA homolog (620 aa).

The protein belongs to the heat shock protein 70 family.

Functionally, chaperone involved in the maturation of iron-sulfur cluster-containing proteins. Has a low intrinsic ATPase activity which is markedly stimulated by HscB. The polypeptide is Chaperone protein HscA homolog (Acinetobacter baylyi (strain ATCC 33305 / BD413 / ADP1)).